The primary structure comprises 320 residues: MPTNSIKLLAPDVHRGLAELVAKRLGLQLTSSKLKRDPTGEVSFSIGESVRDQDIFIITQIGSGVVNDRVLELLIMINASKTASARRITAIIPNFPYARQDRKDKSRAPITAKLMADMLTTAGCDHVITMDLHASQIQGFFDVPVDNLYAEPSVVRYIKENVNYMDSIIISPDAGGAKRAATLADRLDLNFALIHKERARANEVSRMVLVGDVTDKICIIVDDMADTCGTLAKAAEILLENRAKSVIAIVTHGVLSGRAIENINNSKLDRVVCTNTVPFEEKIKKCPKLAVIDISSVLAESIRRLHNGESISYLFKNYPL.

Positions 131, 133, 142, and 146 each coordinate Mg(2+).

The protein belongs to the ribose-phosphate pyrophosphokinase family.

It localises to the cytoplasm. The catalysed reaction is D-ribose 5-phosphate + ATP = 5-phospho-alpha-D-ribose 1-diphosphate + AMP + H(+). It participates in metabolic intermediate biosynthesis; 5-phospho-alpha-D-ribose 1-diphosphate biosynthesis; 5-phospho-alpha-D-ribose 1-diphosphate from D-ribose 5-phosphate (route I): step 1/1. Its function is as follows. 5-phosphoribose 1-diphosphate synthase involved in nucleotide, histidine, and tryptophan biosynthesis. Active in heteromultimeric complexes with other 5-phosphoribose 1-diphosphate synthases (PRS2, PRS3, PRS4 and PRS5). In Saccharomyces cerevisiae (strain ATCC 204508 / S288c) (Baker's yeast), this protein is Ribose-phosphate pyrophosphokinase 3 (PRS3).